Here is a 205-residue protein sequence, read N- to C-terminus: Fibroblast growth factor homolog (205 aa).

A signal peptide spans 1–17 (MHRLALVVATVAYLCAG).

Belongs to the heparin-binding growth factors family.

This Orgyia pseudotsugata multicapsid polyhedrosis virus (OpMNPV) protein is Fibroblast growth factor homolog (FGF).